The following is a 356-amino-acid chain: tRNA N6-adenosine threonylcarbamoyltransferase (356 aa).

Residues histidine 115 and histidine 119 each contribute to the Fe cation site. Residues 138–142 (LVSGG), aspartate 171, glycine 184, and asparagine 283 each bind substrate. Residue aspartate 311 participates in Fe cation binding.

The protein belongs to the KAE1 / TsaD family. The cofactor is Fe(2+).

Its subcellular location is the cytoplasm. The enzyme catalyses L-threonylcarbamoyladenylate + adenosine(37) in tRNA = N(6)-L-threonylcarbamoyladenosine(37) in tRNA + AMP + H(+). In terms of biological role, required for the formation of a threonylcarbamoyl group on adenosine at position 37 (t(6)A37) in tRNAs that read codons beginning with adenine. Is involved in the transfer of the threonylcarbamoyl moiety of threonylcarbamoyl-AMP (TC-AMP) to the N6 group of A37, together with TsaE and TsaB. TsaD likely plays a direct catalytic role in this reaction. The polypeptide is tRNA N6-adenosine threonylcarbamoyltransferase (Prochlorococcus marinus (strain MIT 9515)).